The sequence spans 668 residues: Echinocandin B biosynthetic cluster protein J (668 aa).

Disordered stretches follow at residues 1–20, 92–113, 224–322, 330–349, and 483–506; these read MHFA…DQSL, YTPP…PPTP, PLDH…QSAD, EVAE…SIPT, and NCSS…PPLK. Positions 96 to 106 are enriched in polar residues; that stretch reads SLDSRSSATPP. Residues 264 to 275 show a composition bias toward pro residues; it reads NPEPGTPTPPSP. The span at 311 to 322 shows a compositional bias: polar residues; that stretch reads YRSTPSPCQSAD. The segment covering 484-494 has biased composition (low complexity); that stretch reads CSSSSCSSSAS. Positions 495 to 505 are enriched in basic and acidic residues; the sequence is KKNEEKREPPL.

The protein operates within antifungal biosynthesis. Part of the gene cluster that mediates the biosynthesis of echinocandin B, a fungal lipidated cyclic hexapeptide that acts as an antifungal agent. Linoleoyl-AMP, produced by the fatty-acyl-AMP ligase ecdI, is transferred to the initiation carrier domain (T0) of ecdA. The linoleoyl-S-phosphopantetheinyl-T0 is sequentially extended with L-ornithine, L-threonine, L-proline, L-homotyrosine, L-threonine, and 4R-methyl-L-proline to form the linear hexapeptide. Thereafter, the terminal condensation (C7) performs macrocyclization of the NRPS product and the cyclic scaffold is released from ecdA. All six of the amino acid residues are hydroxylated, including 4R,5R-dihydroxy-L-ornithine, 4R-hydroxyl-L-proline, 3S,4S-dihydroxy-L-homotyrosine, and 3S-hydroxyl-4S-methyl-L-prolin. In the pathway, all the hydroxylation reactions are proposed to occur following completion of the cyclic peptide, so the unhydroxylated precursor produced by ecdA will undergo six rounds of hydroxylation. Five hydroxylase genes (ecdG, ecdH, ecdK, htyE and htyF) are embedded within the echinocandin B (ecd) and L-homotyrosine (hty) clusters. The chain is Echinocandin B biosynthetic cluster protein J from Aspergillus rugulosus (Emericella rugulosa).